Reading from the N-terminus, the 295-residue chain is Glutamyl-Q tRNA(Asp) synthetase (295 aa).

L-glutamate is bound by residues 5-9 and glutamate 41; that span reads RFAPS. Positions 8 to 18 match the 'HIGH' region motif; it reads PSPTGLLHIGS. The Zn(2+) site is built by cysteine 97, cysteine 99, tyrosine 117, and cysteine 121. Positions 178 and 196 each coordinate L-glutamate. Residues 234–238 carry the 'KMSKS' region motif; that stretch reads KWSKQ. Lysine 237 contributes to the ATP binding site.

It belongs to the class-I aminoacyl-tRNA synthetase family. GluQ subfamily. Zn(2+) serves as cofactor.

Functionally, catalyzes the tRNA-independent activation of glutamate in presence of ATP and the subsequent transfer of glutamate onto a tRNA(Asp). Glutamate is transferred on the 2-amino-5-(4,5-dihydroxy-2-cyclopenten-1-yl) moiety of the queuosine in the wobble position of the QUC anticodon. The protein is Glutamyl-Q tRNA(Asp) synthetase of Neisseria meningitidis serogroup A / serotype 4A (strain DSM 15465 / Z2491).